Reading from the N-terminus, the 166-residue chain is Large ribosomal subunit protein uL10 (166 aa).

It belongs to the universal ribosomal protein uL10 family. Part of the ribosomal stalk of the 50S ribosomal subunit. The N-terminus interacts with L11 and the large rRNA to form the base of the stalk. The C-terminus forms an elongated spine to which L12 dimers bind in a sequential fashion forming a multimeric L10(L12)X complex.

Its function is as follows. Forms part of the ribosomal stalk, playing a central role in the interaction of the ribosome with GTP-bound translation factors. This chain is Large ribosomal subunit protein uL10 (rplJ), found in Neisseria meningitidis serogroup A / serotype 4A (strain DSM 15465 / Z2491).